Consider the following 437-residue polypeptide: UDP-N-acetylmuramoylalanine--D-glutamate ligase (437 aa).

115 to 121 (GSNGKST) contacts ATP.

This sequence belongs to the MurCDEF family.

The protein resides in the cytoplasm. The catalysed reaction is UDP-N-acetyl-alpha-D-muramoyl-L-alanine + D-glutamate + ATP = UDP-N-acetyl-alpha-D-muramoyl-L-alanyl-D-glutamate + ADP + phosphate + H(+). It participates in cell wall biogenesis; peptidoglycan biosynthesis. Its function is as follows. Cell wall formation. Catalyzes the addition of glutamate to the nucleotide precursor UDP-N-acetylmuramoyl-L-alanine (UMA). This is UDP-N-acetylmuramoylalanine--D-glutamate ligase from Vibrio parahaemolyticus serotype O3:K6 (strain RIMD 2210633).